The following is a 313-amino-acid chain: Porphobilinogen deaminase (313 aa).

The residue at position 241 (C241) is an S-(dipyrrolylmethanemethyl)cysteine.

Belongs to the HMBS family. As to quaternary structure, monomer. Requires dipyrromethane as cofactor.

It catalyses the reaction 4 porphobilinogen + H2O = hydroxymethylbilane + 4 NH4(+). It functions in the pathway porphyrin-containing compound metabolism; protoporphyrin-IX biosynthesis; coproporphyrinogen-III from 5-aminolevulinate: step 2/4. Its function is as follows. Tetrapolymerization of the monopyrrole PBG into the hydroxymethylbilane pre-uroporphyrinogen in several discrete steps. The polypeptide is Porphobilinogen deaminase (Bacillus velezensis (strain DSM 23117 / BGSC 10A6 / LMG 26770 / FZB42) (Bacillus amyloliquefaciens subsp. plantarum)).